Consider the following 515-residue polypeptide: Bifunctional dihydrofolate reductase-thymidylate synthase (515 aa).

The DHFR domain maps to 26 to 228 (AFSIVVAADQ…LSYEIMKYVP (203 aa)). Val-30 provides a ligand contact to substrate. Residues Ala-32, 38–44 (GIGDGET), 81–83 (RKT), and 101–104 (LSCR) contribute to the NADP(+) site. Substrate is bound by residues Ile-154, Tyr-160, and Thr-178. 155-162 (GGARVYTE) is an NADP(+) binding site. The interval 233–515 (ERQYLELIDR…YPPIKMEMAV (283 aa)) is thymidylate synthase. Arg-253 is a dUMP binding site. Cys-395 is an active-site residue. DUMP-binding positions include His-396, 416-420 (QRCCD), Asn-428, and 458-460 (HVY).

The protein in the N-terminal section; belongs to the dihydrofolate reductase family. This sequence in the C-terminal section; belongs to the thymidylate synthase family.

The catalysed reaction is (6S)-5,6,7,8-tetrahydrofolate + NADP(+) = 7,8-dihydrofolate + NADPH + H(+). It catalyses the reaction dUMP + (6R)-5,10-methylene-5,6,7,8-tetrahydrofolate = 7,8-dihydrofolate + dTMP. Its pathway is cofactor biosynthesis; tetrahydrofolate biosynthesis; 5,6,7,8-tetrahydrofolate from 7,8-dihydrofolate: step 1/1. Functionally, bifunctional enzyme. Involved in de novo dTMP biosynthesis. Key enzyme in folate metabolism. Catalyzes an essential reaction for de novo glycine and purine synthesis, DNA precursor synthesis, and for the conversion of dUMP to dTMP. The polypeptide is Bifunctional dihydrofolate reductase-thymidylate synthase (Crithidia fasciculata).